Consider the following 422-residue polypeptide: Adenylosuccinate synthetase (422 aa).

GTP is bound by residues 12–18 and 40–42; these read GDEGKGK and GHT. D13 serves as the catalytic Proton acceptor. 2 residues coordinate Mg(2+): D13 and G40. IMP contacts are provided by residues 13–16, 38–41, T129, R143, N221, T236, and R300; these read DEGK and NAGH. H41 (proton donor) is an active-site residue. 296–302 provides a ligand contact to substrate; sequence VTTGRKR. Residues R302, 328–330, and 410–412 contribute to the GTP site; these read KLD and GVG.

The protein belongs to the adenylosuccinate synthetase family. In terms of assembly, homodimer. It depends on Mg(2+) as a cofactor.

The protein resides in the cytoplasm. The catalysed reaction is IMP + L-aspartate + GTP = N(6)-(1,2-dicarboxyethyl)-AMP + GDP + phosphate + 2 H(+). The protein operates within purine metabolism; AMP biosynthesis via de novo pathway; AMP from IMP: step 1/2. Plays an important role in the de novo pathway and in the salvage pathway of purine nucleotide biosynthesis. Catalyzes the first committed step in the biosynthesis of AMP from IMP. The protein is Adenylosuccinate synthetase of Pyrenophora tritici-repentis (strain Pt-1C-BFP) (Wheat tan spot fungus).